A 141-amino-acid polypeptide reads, in one-letter code: Hemoglobin subunit alpha (141 aa).

The region spanning Val1–Arg141 is the Globin domain. Phosphoserine is present on Ser3. Residues Lys7 and Lys11 each carry the N6-succinyllysine modification. Lys16 carries the N6-acetyllysine; alternate modification. At Lys16 the chain carries N6-succinyllysine; alternate. A Phosphotyrosine modification is found at Tyr24. Ser35 carries the post-translational modification Phosphoserine. N6-succinyllysine is present on Lys40. Ser49 is subject to Phosphoserine. Position 58 (His58) interacts with O2. Heme b is bound at residue His87. Position 102 is a phosphoserine (Ser102). Thr108 is modified (phosphothreonine). Ser124 and Ser131 each carry phosphoserine. Residues Thr134 and Thr137 each carry the phosphothreonine modification. Ser138 bears the Phosphoserine mark.

The protein belongs to the globin family. Heterotetramer of two alpha chains and two beta chains. In terms of tissue distribution, red blood cells.

Involved in oxygen transport from the lung to the various peripheral tissues. In terms of biological role, hemopressin acts as an antagonist peptide of the cannabinoid receptor CNR1. Hemopressin-binding efficiently blocks cannabinoid receptor CNR1 and subsequent signaling. In Leontocebus fuscicollis (Brown-mantled tamarin), this protein is Hemoglobin subunit alpha (HBA).